A 150-amino-acid chain; its full sequence is Aspartate carbamoyltransferase regulatory chain (150 aa).

Residues C105, C110, C133, and C136 each coordinate Zn(2+).

The protein belongs to the PyrI family. As to quaternary structure, contains catalytic and regulatory chains. The cofactor is Zn(2+).

In terms of biological role, involved in allosteric regulation of aspartate carbamoyltransferase. This chain is Aspartate carbamoyltransferase regulatory chain, found in Thermococcus sibiricus (strain DSM 12597 / MM 739).